Consider the following 1257-residue polypeptide: Neurocan core protein (1257 aa).

Positions 1-22 are cleaved as a signal peptide; sequence MGAESVWASGLLVLWLLLLVSG. One can recognise an Ig-like V-type domain in the interval 37 to 157; the sequence is HMLKSGSGPI…EQDLVTLEVT (121 aa). 5 cysteine pairs are disulfide-bonded: C58–C139, C181–C252, C205–C226, C279–C354, and C303–C324. The N-linked (GlcNAc...) asparagine glycan is linked to N121. Link domains are found at residues 159-254 and 258-356; these read VVFH…YCFA and GGEV…YCFR. N339 carries N-linked (GlcNAc...) asparagine glycosylation. A disordered region spans residues 361-391; that stretch reads TPQRGDSEIPSSGDEGEIVSAEGPPAPELKP. 2 O-linked (Xyl...) (chondroitin sulfate) serine glycosylation sites follow: S380 and S410. The span at 447–459 shows a compositional bias: low complexity; that stretch reads SSTGVPSPSSLGV. 3 disordered regions span residues 447–493, 550–610, and 683–707; these read SSTG…FQQQ, GSLG…AVPS, and GAED…GSPE. Positions 464 to 473 are enriched in polar residues; sequence TTPSGTQVAP. A compositionally biased stretch (low complexity) spans 569 to 580; it reads SPSTVPSTDSTP. N-linked (GlcNAc...) asparagine glycosylation is present at N737. A glycan (O-linked (Xyl...) (chondroitin sulfate) serine) is linked at S944. In terms of domain architecture, EGF-like 1 spans 949-985; the sequence is PTDPCENNPCLHGGTCRTNGTMYGCSCDQGYAGENCE. 11 cysteine pairs are disulfide-bonded: C953/C964, C958/C973, C975/C984, C991/C1002, C996/C1011, C1013/C1022, C1029/C1040, C1057/C1149, C1125/C1141, C1156/C1199, and C1185/C1212. Residue N967 is glycosylated (N-linked (GlcNAc...) asparagine). Residues 987–1023 enclose the EGF-like 2; calcium-binding domain; that stretch reads DIDDCLCSPCENGGTCIDEVNGFICLCLPSYGGNLCE. One can recognise a C-type lectin domain in the interval 1025-1154; it reads DTEGCDRGWH…LPYVCKKGTV (130 aa). The Sushi domain occupies 1154–1214; the sequence is VLCGPPPAVE…WDRPQIVCTK (61 aa). N1164 carries N-linked (GlcNAc...) asparagine glycosylation. The segment covering 1215-1244 has biased composition (basic residues); it reads PRRSHRMRRHHHHPHRHHKPRKEHRKHKRH. Residues 1215–1257 are disordered; sequence PRRSHRMRRHHHHPHRHHKPRKEHRKHKRHPAEDWEKDEGDFC.

It belongs to the aggrecan/versican proteoglycan family. Two isoforms were found that probably arise by proteolytic processing. The large isoform is predominant in early postnatal brain, the small isoform is found in adult brain. Post-translationally, O-glycosylated; contains chondroitin sulfate. In terms of tissue distribution, early postnatal and adult brain; not expressed in kidney, lung, liver and muscle.

It localises to the secreted. Its function is as follows. May modulate neuronal adhesion and neurite growth during development by binding to neural cell adhesion molecules (NG-CAM and N-CAM). Chondroitin sulfate proteoglycan; binds to hyaluronic acid. In Rattus norvegicus (Rat), this protein is Neurocan core protein (Ncan).